Reading from the N-terminus, the 507-residue chain is tRNA-2-methylthio-N(6)-dimethylallyladenosine synthase (507 aa).

One can recognise an MTTase N-terminal domain in the interval 13 to 129; it reads RTYQVRTYGC…LPALLERARH (117 aa). Positions 22, 58, 92, 166, 170, and 173 each coordinate [4Fe-4S] cluster. The Radical SAM core domain maps to 152–388; sequence RESAYAAWVS…IALQESVTLE (237 aa). Residues 391-462 enclose the TRAM domain; it reads QKQIGRMIEV…PHHLIADDGV (72 aa). Positions 459–478 are enriched in basic and acidic residues; the sequence is DDGVRSHRRTRAGDAHEAGK. Residues 459-492 form a disordered region; sequence DDGVRSHRRTRAGDAHEAGKKPSTPGIGLGMPAI.

This sequence belongs to the methylthiotransferase family. MiaB subfamily. Monomer. It depends on [4Fe-4S] cluster as a cofactor.

Its subcellular location is the cytoplasm. It catalyses the reaction N(6)-dimethylallyladenosine(37) in tRNA + (sulfur carrier)-SH + AH2 + 2 S-adenosyl-L-methionine = 2-methylsulfanyl-N(6)-dimethylallyladenosine(37) in tRNA + (sulfur carrier)-H + 5'-deoxyadenosine + L-methionine + A + S-adenosyl-L-homocysteine + 2 H(+). Catalyzes the methylthiolation of N6-(dimethylallyl)adenosine (i(6)A), leading to the formation of 2-methylthio-N6-(dimethylallyl)adenosine (ms(2)i(6)A) at position 37 in tRNAs that read codons beginning with uridine. This is tRNA-2-methylthio-N(6)-dimethylallyladenosine synthase from Mycobacteroides abscessus (strain ATCC 19977 / DSM 44196 / CCUG 20993 / CIP 104536 / JCM 13569 / NCTC 13031 / TMC 1543 / L948) (Mycobacterium abscessus).